A 166-amino-acid chain; its full sequence is Regulatory protein RecX (166 aa).

It belongs to the RecX family.

It localises to the cytoplasm. In terms of biological role, modulates RecA activity. The chain is Regulatory protein RecX from Escherichia coli (strain K12 / MC4100 / BW2952).